Reading from the N-terminus, the 201-residue chain is FMN-dependent NADH:quinone oxidoreductase (201 aa).

Residues Ser9, 16-18 (SVS), and 93-96 (MYNF) each bind FMN.

The protein belongs to the azoreductase type 1 family. As to quaternary structure, homodimer. FMN is required as a cofactor.

It carries out the reaction 2 a quinone + NADH + H(+) = 2 a 1,4-benzosemiquinone + NAD(+). The enzyme catalyses N,N-dimethyl-1,4-phenylenediamine + anthranilate + 2 NAD(+) = 2-(4-dimethylaminophenyl)diazenylbenzoate + 2 NADH + 2 H(+). Its function is as follows. Quinone reductase that provides resistance to thiol-specific stress caused by electrophilic quinones. Functionally, also exhibits azoreductase activity. Catalyzes the reductive cleavage of the azo bond in aromatic azo compounds to the corresponding amines. The sequence is that of FMN-dependent NADH:quinone oxidoreductase from Gluconacetobacter diazotrophicus (strain ATCC 49037 / DSM 5601 / CCUG 37298 / CIP 103539 / LMG 7603 / PAl5).